We begin with the raw amino-acid sequence, 449 residues long: Putative cytochrome P450 135A1 (449 aa).

Residue cysteine 383 participates in heme binding.

It belongs to the cytochrome P450 family. Heme serves as cofactor.

In Mycobacterium tuberculosis (strain CDC 1551 / Oshkosh), this protein is Putative cytochrome P450 135A1 (cyp135A1).